A 667-amino-acid chain; its full sequence is Probable sulfate permease C320.05 (667 aa).

The segment at 1-27 (MSSPSENHLLGPKTSFIDNRTSTSRPL) is disordered. The segment covering 16 to 25 (FIDNRTSTSR) has biased composition (polar residues). Helical transmembrane passes span 77 to 97 (IIWDVLAGCSTACLSVPIALS), 102 to 122 (FLGVPPIYILTGTAIGPILYC), 162 to 182 (ILVTGLIAFIAGIINLAAGLF), 198 to 218 (GCILSISMIIMINQGSVFFGF), 240 to 260 (MSKANIYTTILSCITISLLIG), 275 to 295 (IVSIPDAVIILLLGSFLSKKF), 301 to 321 (YGIAILGEIKTTILLPKLPLP), 336 to 356 (GVMCSFLAFIDTVIAVKAISL), 368 to 388 (LISLGAANIGSSLFCGLPICG), 405 to 425 (VATIACSVLILLATFFIMPVF), 433 to 453 (LASMVVSLGVSLFADAAVEIF), and 465 to 485 (GIIFSIATCTMMFGLETGIIF). The STAS domain maps to 532-657 (SSTAVESAPR…DHVQDSIKKV (126 aa)).

This sequence belongs to the SLC26A/SulP transporter (TC 2.A.53) family.

It is found in the endoplasmic reticulum membrane. Functionally, possible sulfate transporter. This Schizosaccharomyces pombe (strain 972 / ATCC 24843) (Fission yeast) protein is Probable sulfate permease C320.05.